Consider the following 379-residue polypeptide: MTDKYGFLRSSYTNYLSSSKDVYVSQSQIRLFRIKTGDTIRGEVRTPNPKKGEKYFPLKRIFQINGRFPTSVIKRKSFKKLTPLFPNEKFQISKRKVTLSTRIVDFFSPLGKGQRGIIVAPPKTGKTTLLKEIANTIAYNHPEVYLIILLIDERPEEVTDMQRNVNGEVVYSTFDEPAEKHVKVANIVLQKAKRMVECGHDVVILLDSITRLARAYNTVSPTSGKILSGGVDSNALQKPKRFFGAARNIEYGGSLSIIATAIIETGSKMDEVIFEEFKGTGNMELQLDRKIANKRIFPAIDLNASSTRKEEFLLTKYNLNKMFLIRKLLAEMTSVEAIDFIKTRLMKTKNNQEFFKSIKSSIKSSIKSSRDRENIEKKI.

Positions 1 to 68 (MTDKYGFLRS…KRIFQINGRF (68 aa)) constitute a Rho RNA-BD domain. Residues 111–116 (GKGQRG), 123–128 (KTGKTT), and Arg-154 contribute to the ATP site.

Belongs to the Rho family. Homohexamer. The homohexamer assembles into an open ring structure.

Facilitates transcription termination by a mechanism that involves Rho binding to the nascent RNA, activation of Rho's RNA-dependent ATPase activity, and release of the mRNA from the DNA template. This is Transcription termination factor Rho from Karelsulcia muelleri (strain SMDSEM) (Sulcia muelleri).